The sequence spans 415 residues: Meiotic driver wtf36 (415 aa).

Disordered stretches follow at residues 1-49 (MKNK…DLNN) and 67-99 (TTPPDYDENRLHITDEGNNPPNTHRENHSSGTA). A compositionally biased stretch (basic and acidic residues) spans 11–29 (SMDEMSAKNDNEIDLEKGP). Transmembrane regions (helical) follow at residues 105–125 (FLIKLLISFTPIVLLNAPAVC), 142–162 (WTLFGFWCLVCTLALIFLTYF), 169–189 (AVKVTVIFLAQCVKVTVIFLA), 205–225 (VTAISLAKCIKVTAIFLAQCV), 240–260 (VVIIWLLWVVICYTLFLRSKF), 274–294 (CSISAALLLFLLYVRLPFWTL), and 298–318 (FSGLFQVLGVQSCVVIVTKGL).

The protein belongs to the WTF family. Homomer. Forms protein aggregates. The two isoforms can interact with each other and with themselves. High sequence similarity is required for their interaction.

It is found in the spore membrane. The protein resides in the vacuole membrane. The protein localises to the ascus epiplasm. Its subcellular location is the cytoplasm. It localises to the endoplasmic reticulum membrane. In terms of biological role, promotes unequal transmission of alleles from the parental zygote to progeny spores by acting as poison/antidote system where the poison and antidote proteins are produced from the same locus; the poison component is trans-acting and targets all spores within an ascus whereas the antidote component is spore-specific, leading to poisoning of all progeny that do not inherit the allele. Its function is as follows. Localizes isoform 2 to the vacuole thereby facilitating its degradation. Functionally, forms toxic aggregates that disrupt spore maturation. The polypeptide is Meiotic driver wtf36 (Schizosaccharomyces pombe (Fission yeast)).